We begin with the raw amino-acid sequence, 255 residues long: MNFIINSPLEQFTTRVYFGLSSGLINLDTITLTSFSIYSIAVVALILGFSILNDNNTNILPTRWSLAFESLYFTVEKMVSEQIGGLEGRLLFPFMFSLFMYILIANVVSLVPYSYAINAQLIWTIGLSVAIWIGCTLTGLANHGAKFFGLFLPSGTNLPLVPVLVIIELLSYIARALSLGLRLGSNILAGHLLLVILAGLILNFISISIFTFALGILPLSILLGIVALESAIAFIQAIVFTILTCSYIKDAIHLH.

Positions 1 to 6 (MNFIIN) are cleaved as a propeptide — removed in mature form. A run of 5 helical transmembrane segments spans residues 32–52 (LTSF…FSIL), 91–111 (LFPF…VSLV), 121–141 (LIWT…TGLA), 159–200 (PLVP…LAGL), and 219–251 (LSIL…IKDA).

In terms of assembly, F-type ATP synthases have 2 components, the catalytic core F(1) and the membrane-embedded component F(0), linked together by a central stalk and a peripheral stalk. The central stalk, also called rotor shaft, is often seen as part of F(1). The peripheral stalk is seen as part of F(0). F(0) contains the membrane channel next to the rotor. F-type ATP synthases form dimers but each monomer functions independently in ATP generation. The dimer consists of 17 different polypeptides: ATP1 (subunit alpha, 3 molecules per monomer, part of F(1)), ATP2 (subunit beta, 3 copies per monomer, part of F(1)), ATP3 (subunit gamma, part of the central stalk), ATP4 (subunit b, part of the peripheral stalk), ATP5/OSCP (subunit 5/OSCP, part of the peripheral stalk), ATP6 (subunit a, part of the peripheral stalk), ATP7 (subunit d, part of the peripheral stalk), ATP8 (subunit 8, part of the peripheral stalk), OLI1 (subunit c, part of the rotor, 10 molecules per monomer), ATP14 (subunit h, part of the peripheral stalk), ATP15 (subunit epsilon, part of the central stalk), ATP16 (subunit delta, part of the central stalk), ATP17 (subunit f, part of the peripheral stalk), ATP18 (subunit i/j, part of the peripheral stalk), ATP19 (subunit k, dimer-specific, at interface between monomers), ATP20 (subunit g, at interface between monomers), TIM11 (subunit e, at interface between monomers).

The protein resides in the mitochondrion inner membrane. Its function is as follows. Mitochondrial membrane ATP synthase (F(1)F(0) ATP synthase or Complex V) produces ATP from ADP in the presence of a proton gradient across the membrane which is generated by electron transport complexes of the respiratory chain. F-type ATP synthases consist of two structural domains, F(1) - containing the extramembraneous catalytic core, and F(0) - containing the membrane proton channel, linked together by a central stalk and a peripheral stalk. During catalysis, ATP synthesis in the catalytic domain of F(1) is coupled via a rotary mechanism of the central stalk subunits to proton translocation. Key component of the proton channel; it may play a direct role in the translocation of protons across the membrane. The polypeptide is ATP synthase subunit a (Yarrowia lipolytica (strain CLIB 122 / E 150) (Yeast)).